Here is a 190-residue protein sequence, read N- to C-terminus: GTP cyclohydrolase 1 (190 aa).

Zn(2+) is bound by residues C78, H81, and C150.

Belongs to the GTP cyclohydrolase I family. Toroid-shaped homodecamer, composed of two pentamers of five dimers.

It catalyses the reaction GTP + H2O = 7,8-dihydroneopterin 3'-triphosphate + formate + H(+). It participates in cofactor biosynthesis; 7,8-dihydroneopterin triphosphate biosynthesis; 7,8-dihydroneopterin triphosphate from GTP: step 1/1. Its activity is regulated as follows. K(+) ions moderately increases the Vmax, whereas UTP and Ca(2+) and Mg(2+) ions drastically increase the Km for GTP. This Bacillus subtilis (strain 168) protein is GTP cyclohydrolase 1 (folE).